Reading from the N-terminus, the 382-residue chain is Queuine tRNA-ribosyltransferase (382 aa).

Asp96 acts as the Proton acceptor in catalysis. Residues 96-100 (DSGGF), Asp151, Gln194, and Gly221 each bind substrate. Positions 252 to 258 (GVGAPDS) are RNA binding. Asp271 (nucleophile) is an active-site residue. The segment at 276-280 (TRIAR) is RNA binding; important for wobble base 34 recognition. Positions 309, 311, 314, and 340 each coordinate Zn(2+).

It belongs to the queuine tRNA-ribosyltransferase family. As to quaternary structure, homodimer. Within each dimer, one monomer is responsible for RNA recognition and catalysis, while the other monomer binds to the replacement base PreQ1. The cofactor is Zn(2+).

The catalysed reaction is 7-aminomethyl-7-carbaguanine + guanosine(34) in tRNA = 7-aminomethyl-7-carbaguanosine(34) in tRNA + guanine. The protein operates within tRNA modification; tRNA-queuosine biosynthesis. Functionally, catalyzes the base-exchange of a guanine (G) residue with the queuine precursor 7-aminomethyl-7-deazaguanine (PreQ1) at position 34 (anticodon wobble position) in tRNAs with GU(N) anticodons (tRNA-Asp, -Asn, -His and -Tyr). Catalysis occurs through a double-displacement mechanism. The nucleophile active site attacks the C1' of nucleotide 34 to detach the guanine base from the RNA, forming a covalent enzyme-RNA intermediate. The proton acceptor active site deprotonates the incoming PreQ1, allowing a nucleophilic attack on the C1' of the ribose to form the product. After dissociation, two additional enzymatic reactions on the tRNA convert PreQ1 to queuine (Q), resulting in the hypermodified nucleoside queuosine (7-(((4,5-cis-dihydroxy-2-cyclopenten-1-yl)amino)methyl)-7-deazaguanosine). The sequence is that of Queuine tRNA-ribosyltransferase from Lactococcus lactis subsp. cremoris (strain MG1363).